The chain runs to 349 residues: Nuclear distribution protein nudE homolog 1 (349 aa).

A coiled-coil region spans residues 23–189; that stretch reads AMKYKTCSEE…ELAVQQKQEK (167 aa). Residues 182–201 are disordered; it reads AVQQKQEKPKSNMGSPETER.

The protein belongs to the nudE family. Self-associates. Interacts with pafah1b1. In terms of processing, phosphorylated in mitosis.

The protein localises to the cytoplasm. It is found in the cytoskeleton. The protein resides in the microtubule organizing center. Its subcellular location is the centrosome. It localises to the spindle. The protein localises to the chromosome. It is found in the centromere. The protein resides in the kinetochore. Its subcellular location is the cleavage furrow. It localises to the cytoplasmic vesicle membrane. In terms of biological role, required for centrosome duplication and formation and function of the mitotic spindle. The polypeptide is Nuclear distribution protein nudE homolog 1 (nde1) (Xenopus tropicalis (Western clawed frog)).